Reading from the N-terminus, the 443-residue chain is GPI mannosyltransferase 1 (443 aa).

11 helical membrane passes run 8-28, 68-88, 90-110, 136-156, 160-180, 232-252, 273-291, 302-322, 347-367, 374-394, and 406-426; these read PFMV…YGAW, PLLA…FSFG, ALFA…LTLT, TRGS…WAVL, IYLG…PFIY, LTLI…LHYG, FSPY…AGAV, FESL…PLVL, SQYF…SSLL, IAVA…GYLL, and LFLA…VIVA.

This sequence belongs to the PIGM family.

The protein localises to the endoplasmic reticulum membrane. It participates in glycolipid biosynthesis; glycosylphosphatidylinositol-anchor biosynthesis. Functionally, mannosyltransferase involved in glycosylphosphatidylinositol-anchor biosynthesis. Transfers the first alpha-1,4-mannose to GlcN-acyl-PI during GPI precursor assembly. Required for cell wall integrity. This is GPI mannosyltransferase 1 (gpi14) from Emericella nidulans (strain FGSC A4 / ATCC 38163 / CBS 112.46 / NRRL 194 / M139) (Aspergillus nidulans).